Consider the following 131-residue polypeptide: MGRVRTKTVKRAARQIVEKYYGKLGLDFQYNKKVAEEVALIPSKRMRNKVAGFITHLMRRIQKGPVRGISLKLQEEERERRMDYIPEKSELEVPVIQVDQDTADMLNFLKISLPNLKVMSFNAHEHREDTK.

This sequence belongs to the eukaryotic ribosomal protein eS17 family.

This is Small ribosomal subunit protein eS17 (RPS17) from Theileria annulata.